Here is a 275-residue protein sequence, read N- to C-terminus: MTTYAVGDLQGCLEPLTCLLERVDFSPSRDCLWLAGDLVNRGPQSLEALRFVRDLESSAITVLGNHDLHLLAVAHNIERMRKSDTLQAILDAPDRADLIDWLRQQKLIHYDAERHTAMVHAGIPPQWSLEKALRRAAEVEQALQDDALLLPFLDGMYGNQPAKWNKELHGVPRLRLITNYFTRMRFCKADGTLDLDAKEGADSAPAGYAPWFSHASRKTRNVKLIFGHWAALEGQCDEPNVFALDTGCVWGNAMTLMNLDSGEMHRCECEHGKPA.

Belongs to the Ap4A hydrolase family.

It carries out the reaction P(1),P(4)-bis(5'-adenosyl) tetraphosphate + H2O = 2 ADP + 2 H(+). Hydrolyzes diadenosine 5',5'''-P1,P4-tetraphosphate to yield ADP. In Stutzerimonas stutzeri (strain A1501) (Pseudomonas stutzeri), this protein is Bis(5'-nucleosyl)-tetraphosphatase, symmetrical.